Consider the following 66-residue polypeptide: MPKLKTKSGAKKRFKVTGTGKVMHAQRGKRHGMIKRTKKQIRQLRGTRVLFKTDGDNVKKYFLPNA.

Basic residues-rich tracts occupy residues 1–15 and 24–40; these read MPKL…KRFK and HAQR…TKKQ. The tract at residues 1-40 is disordered; the sequence is MPKLKTKSGAKKRFKVTGTGKVMHAQRGKRHGMIKRTKKQ.

This sequence belongs to the bacterial ribosomal protein bL35 family.

The protein is Large ribosomal subunit protein bL35 of Bradyrhizobium sp. (strain ORS 278).